Reading from the N-terminus, the 599-residue chain is UPF0313 protein UNCMA_01890 (599 aa).

The Radical SAM core domain maps to 281–557 (EDIPALRTVR…RALLQYKNPE (277 aa)). 3 residues coordinate [4Fe-4S] cluster: Cys-299, Cys-303, and Cys-306.

This sequence belongs to the UPF0313 family. Requires [4Fe-4S] cluster as cofactor.

This is UPF0313 protein UNCMA_01890 from Methanocella arvoryzae (strain DSM 22066 / NBRC 105507 / MRE50).